The following is a 445-amino-acid chain: Xylose isomerase (445 aa).

Active-site residues include His107 and Asp110. The Mg(2+) site is built by Glu238, Glu274, His277, Asp302, Asp313, Asp315, and Asp345.

This sequence belongs to the xylose isomerase family. Homotetramer. Requires Mg(2+) as cofactor.

It localises to the cytoplasm. The catalysed reaction is alpha-D-xylose = alpha-D-xylulofuranose. This is Xylose isomerase (xylA) from Bacillus subtilis (strain 168).